Consider the following 361-residue polypeptide: MSKRAFNFCAGPAALPTAVLERAQAEFLDWQGKGLSVMEMSHRSDEYVAIAAKAEQDLRDLLGIPSNYKVLFLQGGASQQFAEIPLNLLPEGGVADYVDTGIWSRKSMEEARRFGTVNVAASAKAYDYFALPGQNEWRLSKDAAYLHYASNETIGGLQFDWVPETGEVPLVVDMSSDILSRPIDVSRFGLIYAGAQKNIGPSGLVVVIVREDLLGRARSVCPTMLDYKVAADNGSMYNTPATFSWYLSGLVFEWLKEQGGVEAMAQRNRAKKDLLYGFIDGSGFYTNPIAVDARSWMNVPFRLADEKLDKPFLAGAEERGLLNLKGHRSVGGMRASIYNAVGLDAVEALVAYMAEFEKEHG.

An L-glutamate-binding site is contributed by Arg-43. Residues 77 to 78 (AS), Trp-103, Thr-153, Asp-173, and Gln-196 contribute to the pyridoxal 5'-phosphate site. Residue Lys-197 is modified to N6-(pyridoxal phosphate)lysine. 238–239 (NT) is a binding site for pyridoxal 5'-phosphate.

This sequence belongs to the class-V pyridoxal-phosphate-dependent aminotransferase family. SerC subfamily. In terms of assembly, homodimer. The cofactor is pyridoxal 5'-phosphate.

The protein resides in the cytoplasm. The catalysed reaction is O-phospho-L-serine + 2-oxoglutarate = 3-phosphooxypyruvate + L-glutamate. It catalyses the reaction 4-(phosphooxy)-L-threonine + 2-oxoglutarate = (R)-3-hydroxy-2-oxo-4-phosphooxybutanoate + L-glutamate. It functions in the pathway amino-acid biosynthesis; L-serine biosynthesis; L-serine from 3-phospho-D-glycerate: step 2/3. Its pathway is cofactor biosynthesis; pyridoxine 5'-phosphate biosynthesis; pyridoxine 5'-phosphate from D-erythrose 4-phosphate: step 3/5. Catalyzes the reversible conversion of 3-phosphohydroxypyruvate to phosphoserine and of 3-hydroxy-2-oxo-4-phosphonooxybutanoate to phosphohydroxythreonine. This is Phosphoserine aminotransferase from Azotobacter vinelandii (strain DJ / ATCC BAA-1303).